A 198-amino-acid chain; its full sequence is Peroxiredoxin-2 (198 aa).

At alanine 2 the chain carries N-acetylalanine. Residues 6-164 enclose the Thioredoxin domain; the sequence is AHIGKPAPDF…ALRLVQAFQY (159 aa). Cysteine 51 (cysteine sulfenic acid (-SOH) intermediate) is an active-site residue. Serine 112 carries the post-translational modification Phosphoserine. Position 182 is a phosphothreonine (threonine 182). Lysine 196 bears the N6-acetyllysine mark.

It belongs to the peroxiredoxin family. AhpC/Prx1 subfamily. As to quaternary structure, homodimer; disulfide-linked, upon oxidation. 5 homodimers assemble to form a ring-like decamer. Interacts with TIPIN. Post-translationally, the enzyme can be inactivated by further oxidation of the cysteine sulfenic acid (C(P)-SOH) to sulphinic acid (C(P)-SO2H) instead of its condensation to a disulfide bond. It can be reactivated by forming a transient disulfide bond with sulfiredoxin SRXN1, which reduces the cysteine sulfinic acid in an ATP- and Mg-dependent manner. In terms of processing, acetylation increases resistance to transition to high molecular-mass complexes. Deacetylated by HDAC6 which decreases reducing activity.

It localises to the cytoplasm. It carries out the reaction a hydroperoxide + [thioredoxin]-dithiol = an alcohol + [thioredoxin]-disulfide + H2O. Thiol-specific peroxidase that catalyzes the reduction of hydrogen peroxide and organic hydroperoxides to water and alcohols, respectively. Plays a role in cell protection against oxidative stress by detoxifying peroxides and as sensor of hydrogen peroxide-mediated signaling events. Might participate in the signaling cascades of growth factors and tumor necrosis factor-alpha by regulating the intracellular concentrations of H(2)O(2). This chain is Peroxiredoxin-2 (Prdx2), found in Rattus norvegicus (Rat).